We begin with the raw amino-acid sequence, 343 residues long: Pseudaminic acid synthase (343 aa).

The AFP-like domain occupies 287-343 (SLYASKDIKKGEIFSEENVKSVRPSFGLHPKFYQELLGKKASKDIEFGDALKESDFR).

The protein belongs to the pseudaminic acid synthase family. Requires a divalent metal cation as cofactor.

It carries out the reaction 2,4-diacetamido-2,4,6-trideoxy-beta-L-altrose + phosphoenolpyruvate + H2O = pseudaminate + phosphate. Functionally, catalyzes the fifth step in the biosynthesis of pseudaminic acid, a sialic-acid-like sugar that is used to modify flagellin. Catalyzes the condensation of phosphoenolpyruvate with 2,4-diacetamido-2,4,6-trideoxy-beta-l-altropyranose, forming pseudaminic acid. This is Pseudaminic acid synthase (pseI) from Campylobacter jejuni subsp. jejuni serotype O:23/36 (strain 81-176).